The chain runs to 335 residues: Tetraacyldisaccharide 4'-kinase (335 aa).

ATP is bound at residue 51–58 (HVGGAGKT).

It belongs to the LpxK family.

The catalysed reaction is a lipid A disaccharide + ATP = a lipid IVA + ADP + H(+). Its pathway is glycolipid biosynthesis; lipid IV(A) biosynthesis; lipid IV(A) from (3R)-3-hydroxytetradecanoyl-[acyl-carrier-protein] and UDP-N-acetyl-alpha-D-glucosamine: step 6/6. Its function is as follows. Transfers the gamma-phosphate of ATP to the 4'-position of a tetraacyldisaccharide 1-phosphate intermediate (termed DS-1-P) to form tetraacyldisaccharide 1,4'-bis-phosphate (lipid IVA). The sequence is that of Tetraacyldisaccharide 4'-kinase from Nitrobacter hamburgensis (strain DSM 10229 / NCIMB 13809 / X14).